The chain runs to 366 residues: Chorismate synthase (366 aa).

NADP(+)-binding residues include Arg-48 and Arg-54. FMN-binding positions include 132-134 (RSS), 244-245 (NA), Gly-289, 304-308 (KPTSS), and Arg-330.

Belongs to the chorismate synthase family. In terms of assembly, homotetramer. It depends on FMNH2 as a cofactor.

The catalysed reaction is 5-O-(1-carboxyvinyl)-3-phosphoshikimate = chorismate + phosphate. The protein operates within metabolic intermediate biosynthesis; chorismate biosynthesis; chorismate from D-erythrose 4-phosphate and phosphoenolpyruvate: step 7/7. Catalyzes the anti-1,4-elimination of the C-3 phosphate and the C-6 proR hydrogen from 5-enolpyruvylshikimate-3-phosphate (EPSP) to yield chorismate, which is the branch point compound that serves as the starting substrate for the three terminal pathways of aromatic amino acid biosynthesis. This reaction introduces a second double bond into the aromatic ring system. This is Chorismate synthase from Methylorubrum extorquens (strain PA1) (Methylobacterium extorquens).